Reading from the N-terminus, the 150-residue chain is MKVVLLKDVAGLGIRGQVVKVAEGYGRNYLIPKGLAEEATPGRIKELARLDQAREERVERLAAQARKVAAGLKGLTVRIPARAGEGGKLFGSVGNKDIAAALAARHNLKIDRKKLELKEPIRSLGKFPVLARLHPGVQVEFEVEVVDNGT.

The protein belongs to the bacterial ribosomal protein bL9 family.

Its function is as follows. Binds to the 23S rRNA. This is Large ribosomal subunit protein bL9 from Desulforudis audaxviator (strain MP104C).